We begin with the raw amino-acid sequence, 396 residues long: F-box protein pof13 (396 aa).

The F-box domain maps to 40–89 (KNSNLFLLNRDIWSLIINYLDAFDILRLMHSSRQFYYWLRKSAVDECCFN).

In terms of assembly, part of a SCF (SKP1-cullin-F-box) protein ligase complex. Interacts with skp1.

It localises to the cytoplasm. It functions in the pathway protein modification; protein ubiquitination. The sequence is that of F-box protein pof13 (pof13) from Schizosaccharomyces pombe (strain 972 / ATCC 24843) (Fission yeast).